Consider the following 66-residue polypeptide: Conotoxin mr5.2 (66 aa).

The signal sequence occupies residues methionine 1–threonine 19. Positions valine 20–aspartate 48 are excised as a propeptide. A 4-carboxyglutamate mark is found at glutamate 57 and glutamate 61. Asparagine 65 is modified (asparagine amide).

Contains 2 disulfide bonds that can be either 'C1-C3, C2-C4' or 'C1-C4, C2-C3', since these disulfide connectivities have been observed for conotoxins with cysteine framework V (for examples, see AC P0DQQ7 and AC P81755). In terms of tissue distribution, expressed by the venom duct.

It localises to the secreted. The polypeptide is Conotoxin mr5.2 (Conus marmoreus (Marble cone)).